The sequence spans 913 residues: Protein translocase subunit SecA (913 aa).

ATP is bound by residues Q87, 105–109 (GEGKT), and D512. Positions 897, 899, 908, and 909 each coordinate Zn(2+).

The protein belongs to the SecA family. Monomer and homodimer. Part of the essential Sec protein translocation apparatus which comprises SecA, SecYEG and auxiliary proteins SecDF-YajC and YidC. The cofactor is Zn(2+).

It localises to the cell inner membrane. Its subcellular location is the cytoplasm. The catalysed reaction is ATP + H2O + cellular proteinSide 1 = ADP + phosphate + cellular proteinSide 2.. Part of the Sec protein translocase complex. Interacts with the SecYEG preprotein conducting channel. Has a central role in coupling the hydrolysis of ATP to the transfer of proteins into and across the cell membrane, serving both as a receptor for the preprotein-SecB complex and as an ATP-driven molecular motor driving the stepwise translocation of polypeptide chains across the membrane. The protein is Protein translocase subunit SecA of Pseudomonas savastanoi pv. phaseolicola (strain 1448A / Race 6) (Pseudomonas syringae pv. phaseolicola (strain 1448A / Race 6)).